A 228-amino-acid chain; its full sequence is Potassium/proton antiporter CemA (228 aa).

3 helical membrane-spanning segments follow: residues 6–26, 113–133, and 188–208; these read FIPLLYLTSIVFLPWWVSFSF, IICFVILSGYSFLVNEELFIL, and IISGLVSTFPVIFDTIFKYWI.

Belongs to the CemA family.

The protein resides in the plastid. The protein localises to the chloroplast inner membrane. The catalysed reaction is K(+)(in) + H(+)(out) = K(+)(out) + H(+)(in). Contributes to K(+)/H(+) antiport activity by supporting proton efflux to control proton extrusion and homeostasis in chloroplasts in a light-dependent manner to modulate photosynthesis. Prevents excessive induction of non-photochemical quenching (NPQ) under continuous-light conditions. Indirectly promotes efficient inorganic carbon uptake into chloroplasts. In Populus alba (White poplar), this protein is Potassium/proton antiporter CemA.